Reading from the N-terminus, the 737-residue chain is ATP-dependent RNA helicase DDX50 (737 aa).

Residues 1 to 131 (MPGKLLWGDI…SDNKLEETLT (131 aa)) form a disordered region. Residues 11–20 (MELEAPLEES) are compositionally biased toward acidic residues. 3 stretches are compositionally biased toward basic and acidic residues: residues 38-51 (HYDS…RENG), 67-87 (KEKL…EFSK), and 117-131 (STHK…ETLT). 5 positions are modified to phosphoserine: serine 41, serine 82, serine 86, serine 121, and serine 122. Residue lysine 125 forms a Glycyl lysine isopeptide (Lys-Gly) (interchain with G-Cter in SUMO2) linkage. The Q motif motif lies at 137-165 (GAFSNFPISEETIKLLKGRGVTYLFPIQV). Residues 168 to 347 (FGPVYEGKDL…KKYMKSRYEQ (180 aa)) form the Helicase ATP-binding domain. 181 to 188 (ARTGTGKT) is an ATP binding site. At threonine 247 the chain carries Phosphothreonine. The DEVD box motif lies at 290–293 (DEVD). The region spanning 380–524 (DVLQVYSGSE…GVPSTMDLVK (145 aa)) is the Helicase C-terminal domain. Serine 518 carries the post-translational modification Phosphoserine. Residues 668–737 (YDGNTSSNSR…RSGGHKRSFD (70 aa)) are disordered. The span at 673 to 687 (SSNSRQRSGWSSGRS) shows a compositional bias: low complexity. Positions 691–701 (GRSGGRSGGRS) are enriched in gly residues. A compositionally biased stretch (low complexity) spans 702–712 (GRQSRQGSRSG). The span at 720–737 (RSGNRNRSRSGGHKRSFD) shows a compositional bias: basic residues.

The protein belongs to the DEAD box helicase family. DDX21/DDX50 subfamily. In terms of assembly, interacts with C1QBP. Interacts with the ubiquitin ligase CTLH complex through GID4. Interacts with TICAM1. As to expression, highest expression in skeletal muscle, liver, heart, placenta, and kidney.

Its subcellular location is the nucleus. It is found in the nucleolus. It localises to the cytoplasm. It catalyses the reaction ATP + H2O = ADP + phosphate + H(+). ATP-dependent RNA helicase that may play a role in various aspects of RNA metabolism including pre-mRNA splicing or ribosomal RNA production. Also acts as a viral restriction factor and promotes the activation of the NF-kappa-B and IRF3 signaling pathways following its stimulation with viral RNA or infection with RNA and DNA viruses. For instance, decreases vaccinia virus, herpes simplex virus, Zika virus or dengue virus replication during the early stage of infection. Mechanistically, acts via the adapter TICAM1 and independently of the DDX1-DDX21-DHX36 helicase complex to induce the production of interferon-beta. The sequence is that of ATP-dependent RNA helicase DDX50 (DDX50) from Homo sapiens (Human).